The following is a 268-amino-acid chain: Zinc transporter ZupT (268 aa).

The next 8 helical transmembrane spans lie at 6–26 (IIFAFSLTLFAGLATGVGGVI), 37–57 (FLAGSLGFSVGVMLFVSFVEI), 73–93 (GGNWAATGAFFAGIALIAVID), 126–146 (VLTAIAISIHNFPEGFATFVA), 153–173 (IAIPVAVAIAIHNIPEGIAVA), 189–209 (WATLSGLAEPAGAVVGFILLM), 211–231 (FLGPEAMGLSFAAVAGIMVFI), and 248–268 (TAIYGLVGGMAVMAVSLLLFI). Fe(2+) contacts are provided by Asn-136 and Glu-139. Residues Glu-139 and His-164 each coordinate Zn(2+). The Fe(2+) site is built by Asn-165, Glu-168, and Glu-197. Glu-168 provides a ligand contact to Zn(2+).

Belongs to the ZIP transporter (TC 2.A.5) family. ZupT subfamily.

It localises to the cell membrane. The catalysed reaction is Zn(2+)(in) = Zn(2+)(out). In terms of biological role, mediates zinc uptake. May also transport other divalent cations. The sequence is that of Zinc transporter ZupT from Corynebacterium efficiens (strain DSM 44549 / YS-314 / AJ 12310 / JCM 11189 / NBRC 100395).